The chain runs to 343 residues: tRNA N6-adenosine threonylcarbamoyltransferase (343 aa).

The Fe cation site is built by His-111 and His-115. Residues 133-137, Asp-166, Gly-179, Asp-183, and Asn-273 each bind substrate; that span reads AVSGG. Asp-301 contacts Fe cation.

Belongs to the KAE1 / TsaD family. Fe(2+) serves as cofactor.

The protein resides in the cytoplasm. The enzyme catalyses L-threonylcarbamoyladenylate + adenosine(37) in tRNA = N(6)-L-threonylcarbamoyladenosine(37) in tRNA + AMP + H(+). Required for the formation of a threonylcarbamoyl group on adenosine at position 37 (t(6)A37) in tRNAs that read codons beginning with adenine. Is involved in the transfer of the threonylcarbamoyl moiety of threonylcarbamoyl-AMP (TC-AMP) to the N6 group of A37, together with TsaE and TsaB. TsaD likely plays a direct catalytic role in this reaction. This is tRNA N6-adenosine threonylcarbamoyltransferase from Geotalea uraniireducens (strain Rf4) (Geobacter uraniireducens).